Here is a 344-residue protein sequence, read N- to C-terminus: CRISPR-associated endonuclease Cas1 2 (344 aa).

Mn(2+) is bound by residues Glu-167, His-235, and Glu-250.

Belongs to the CRISPR-associated endonuclease Cas1 family. In terms of assembly, homodimer, forms a heterotetramer with a Cas2 homodimer. It depends on Mg(2+) as a cofactor. Requires Mn(2+) as cofactor.

Its function is as follows. CRISPR (clustered regularly interspaced short palindromic repeat), is an adaptive immune system that provides protection against mobile genetic elements (viruses, transposable elements and conjugative plasmids). CRISPR clusters contain spacers, sequences complementary to antecedent mobile elements, and target invading nucleic acids. CRISPR clusters are transcribed and processed into CRISPR RNA (crRNA). Acts as a dsDNA endonuclease. Involved in the integration of spacer DNA into the CRISPR cassette. In Rhodospirillum rubrum (strain ATCC 11170 / ATH 1.1.1 / DSM 467 / LMG 4362 / NCIMB 8255 / S1), this protein is CRISPR-associated endonuclease Cas1 2.